Consider the following 265-residue polypeptide: NADH dehydrogenase [ubiquinone] iron-sulfur protein 3, mitochondrial (265 aa).

A mitochondrion-targeting transit peptide spans 1-33; the sequence is MAALIRNLGARAAVAALSAKHVVPAAGSTALRM.

It belongs to the complex I 30 kDa subunit family. As to quaternary structure, part of the mitochondrial membrane respiratory chain NADH dehydrogenase (Complex I). Interacts with sicily; interaction is stronger with unprocessed sicily protein.

Its subcellular location is the mitochondrion. It catalyses the reaction a ubiquinone + NADH + 5 H(+)(in) = a ubiquinol + NAD(+) + 4 H(+)(out). Core subunit of the mitochondrial membrane respiratory chain NADH dehydrogenase (Complex I) that is believed to belong to the minimal assembly required for catalysis. Complex I functions in the transfer of electrons from NADH to the respiratory chain. The immediate electron acceptor for the enzyme is believed to be ubiquinone. This Drosophila melanogaster (Fruit fly) protein is NADH dehydrogenase [ubiquinone] iron-sulfur protein 3, mitochondrial.